A 1790-amino-acid chain; its full sequence is Vitellogenin (1790 aa).

The first 19 residues, 1–19 (MWSTVALCLLVGLSYVSSS), serve as a signal peptide directing secretion. The 777-residue stretch at 23–799 (WKDNTEYVYS…SAESSFPKIM (777 aa)) folds into the Vitellogenin domain. N-linked (GlcNAc...) asparagine glycans are attached at residues Asn-219 and Asn-297. Over residues 342 to 353 (LMEDSSSEESSE) the composition is skewed to acidic residues. Positions 342–400 (LMEDSSSEESSEQEMTHRRFRRSANSLTKQWRESSEEWNQQQQQPRPQLTRAPHSPLLP) are disordered. Residues 378 to 389 (EWNQQQQQPRPQ) show a composition bias toward low complexity. Asn-554, Asn-573, Asn-893, Asn-1345, Asn-1416, Asn-1430, Asn-1480, Asn-1699, and Asn-1735 each carry an N-linked (GlcNAc...) asparagine glycan. A VWFD domain is found at 1466-1675 (PTCVIDQTTA…SYQVEKGQQW (210 aa)). Cys-1468 and Cys-1638 form a disulfide bridge.

The protein resides in the secreted. Precursor of the egg-yolk proteins that are sources of nutrients during embryonic development. This chain is Vitellogenin (VTG), found in Anthonomus grandis (Mexican cotton boll weevil).